Reading from the N-terminus, the 124-residue chain is Urease subunit beta (124 aa).

The protein belongs to the urease beta subunit family. Heterotrimer of UreA (gamma), UreB (beta) and UreC (alpha) subunits. Three heterotrimers associate to form the active enzyme.

It localises to the cytoplasm. It carries out the reaction urea + 2 H2O + H(+) = hydrogencarbonate + 2 NH4(+). The protein operates within nitrogen metabolism; urea degradation; CO(2) and NH(3) from urea (urease route): step 1/1. The polypeptide is Urease subunit beta (Bacillus velezensis (strain DSM 23117 / BGSC 10A6 / LMG 26770 / FZB42) (Bacillus amyloliquefaciens subsp. plantarum)).